The chain runs to 894 residues: Microsomal triglyceride transfer protein large subunit (894 aa).

The signal sequence occupies residues M1–S18. The region spanning L28–L659 is the Vitellogenin domain. Residues C174 and C194 are joined by a disulfide bond.

As to quaternary structure, heterodimer; heterodimerizes with the protein disulfide isomerase (P4HB/PDI). Interacts with APOB. Interacts with PRAP1. As to expression, liver and small intestine. Also found in ovary, testis and kidney.

It localises to the endoplasmic reticulum. It is found in the golgi apparatus. It carries out the reaction a 1,2-diacyl-sn-glycero-3-phosphocholine(in) = a 1,2-diacyl-sn-glycero-3-phosphocholine(out). The enzyme catalyses a 1,2-diacyl-sn-glycero-3-phosphoethanolamine(in) = a 1,2-diacyl-sn-glycero-3-phosphoethanolamine(out). It catalyses the reaction a cholesterol ester(in) = a cholesterol ester(out). The catalysed reaction is a triacyl-sn-glycerol(in) = a triacyl-sn-glycerol(out). Functionally, catalyzes the transport of triglyceride, cholesteryl ester, and phospholipid between phospholipid surfaces. Required for the assembly and secretion of plasma lipoproteins that contain apolipoprotein B. May be involved in regulating cholesteryl ester biosynthesis in cells that produce lipoproteins. This Homo sapiens (Human) protein is Microsomal triglyceride transfer protein large subunit (MTTP).